The following is a 364-amino-acid chain: Lytic cellulose monooxygenase (364 aa).

Residues 1–34 form the signal peptide; it reads MARRSRYISLAAVMATLLSALGVTFLLGQGRAEA. 2 residues coordinate Cu cation: His35 and His144. Residues 35 to 225 enclose the Chitin-binding type-4 domain; sequence HGVAMMPGSR…QENFFSCSDV (191 aa). Residues 234–261 are disordered; sequence VTGIRGSGGTPTPTPTPTTPPTTPPPTH. Residues 245 to 260 show a composition bias toward pro residues; that stretch reads TPTPTPTTPPTTPPPT. The 107-residue stretch at 258–364 folds into the CBM2 domain; the sequence is PPTHSGSCMA…PVGTIGCVAP (107 aa).

It depends on Cu(2+) as a cofactor.

The protein localises to the secreted. It carries out the reaction [(1-&gt;4)-beta-D-glucosyl]n+m + reduced acceptor + O2 = [(1-&gt;4)-beta-D-glucosyl]m-1-(1-&gt;4)-D-glucono-1,5-lactone + [(1-&gt;4)-beta-D-glucosyl]n + acceptor + H2O.. It participates in glycan metabolism; cellulose degradation. Its function is as follows. Involved in the degradation of lignocellulosic biomass. Catalyzes the oxidative cleavage of glycosidic bonds in cellulosic substrates via a copper-dependent mechanism. Degrades phosphoric acid swollen cellulose (PASC) to oxidized cellooligosaccharides with degrees of polymerization of 4-8. Also shows activity on agricultural fiber paper pulps such as flax pulp. Is not active on chitin. This Streptomyces ambofaciens (strain ATCC 23877 / 3486 / DSM 40053 / JCM 4204 / NBRC 12836 / NRRL B-2516) protein is Lytic cellulose monooxygenase.